A 1475-amino-acid polypeptide reads, in one-letter code: Sterol 3-beta-glucosyltransferase (1475 aa).

Disordered stretches follow at residues 1 to 73 (MPPP…PPMF) and 94 to 218 (HDRF…EDDK). The segment covering 8–17 (LPLHGPAGAA) has biased composition (low complexity). The segment covering 30–40 (RVGKKLQKKRH) has biased composition (basic residues). A compositionally biased stretch (basic and acidic residues) spans 108–118 (GPQRDSADRSH). Basic residues predominate over residues 156–168 (EKHKRKISGHKLL). The GRAM 1 domain maps to 270–315 (QDIFEFDQPEAVIEEYPCWLLQSVLLQGYMYITAKHICFYSYLPKK). A PH domain is found at 318–413 (EVVKSGYLSK…WVKSLQRVIF (96 aa)). Disordered regions lie at residues 492-541 (ARLK…TTNK), 594-636 (SSPR…MEEP), and 653-715 (QILR…PVTP). Over residues 505-531 (QQQQQQHPMQPPMQASARSSMSGSRRA) the composition is skewed to low complexity. 2 stretches are compositionally biased toward polar residues: residues 621 to 634 (QQGS…SSME) and 653 to 674 (QILR…SASR). A compositionally biased stretch (basic and acidic residues) spans 675–686 (TEVEKQQRRDPR). Residues 798 to 901 (RFRAHFALPE…RDDCAVTLLQ (104 aa)) form the GRAM 2 domain. UDP-alpha-D-glucose-binding residues include Ser-989, Arg-990, Asp-992, Ala-1293, His-1295, His-1308, Ser-1311, Gly-1312, Thr-1313, Asp-1332, and Gln-1333. The disordered stretch occupies residues 1413-1475 (IQVEPDEDEE…RVSPSQQSVA (63 aa)). Over residues 1416 to 1425 (EPDEDEESAE) the composition is skewed to acidic residues.

It belongs to the glycosyltransferase 28 family.

The protein resides in the cytoplasm. It localises to the preautophagosomal structure membrane. The catalysed reaction is a sterol + UDP-alpha-D-glucose = a sterol 3-beta-D-glucoside + UDP + H(+). It catalyses the reaction ergosterol + UDP-alpha-D-glucose = ergosteryl 3-beta-D-glucoside + UDP + H(+). Its function is as follows. Sterol glycosyltransferase responsible for the glycosylation of ergosterol to form ergosterol-glucoside. Mediates autophagic degradation of peroxisomes (pexophagy) and is involved in pathogenesis via peroxisome degradation inside appressoria that are developing into the host invasion stage. This chain is Sterol 3-beta-glucosyltransferase, found in Glomerella lagenarium (Anthracnose fungus).